A 506-amino-acid polypeptide reads, in one-letter code: Acyl-CoA-binding domain-containing protein 5 (506 aa).

The ACB domain maps to 44–133 (YETRFEAAVK…MKKIIETMPM (90 aa)). Residues 55-64 (IQSLPKNGSF), 75-79 (YSFYK), Lys101, and Tyr120 contribute to the an acyl-CoA site. Residues 175-217 (AKAVNGKAESSDSGAESEEEEAQEELKGAEQSGSDDKKMMTKS) form a disordered region. The stretch at 181-209 (KAESSDSGAESEEEEAQEELKGAEQSGSD) forms a coiled coil. Residues Ser184, Ser185, Ser187, Ser191, Ser206, and Ser233 each carry the phosphoserine modification. Residues 198–217 (EELKGAEQSGSDDKKMMTKS) show a composition bias toward basic and acidic residues. Disordered regions lie at residues 234–302 (FAQD…CDSM) and 345–417 (AVKG…RGSR). Residues 238-257 (SDIHTDSSRSARRSEDKKPT) show a composition bias toward basic and acidic residues. Residues 258-267 (DQSSQQTGNT) show a composition bias toward polar residues. Ser301 carries the post-translational modification Phosphoserine. Over residues 348 to 360 (GKGEVKHGGEDGR) the composition is skewed to basic and acidic residues. A Phosphoserine modification is found at Ser403. Basic and acidic residues predominate over residues 406–416 (DGERWGSDRGS). The stretch at 426-451 (LVLIRLQEDMQNVLQRLHKLETLTAS) forms a coiled coil. Residue Lys444 is modified to N6-acetyllysine. A helical membrane pass occupies residues 478–498 (GALAFAIIWPFIAQWLVHLYY).

Belongs to the ATG37 family.

It localises to the peroxisome membrane. Its function is as follows. Acyl-CoA binding protein which acts as the peroxisome receptor for pexophagy but is dispensable for aggrephagy and nonselective autophagy. Binds medium- and long-chain acyl-CoA esters. This is Acyl-CoA-binding domain-containing protein 5 (Acbd5) from Rattus norvegicus (Rat).